A 337-amino-acid chain; its full sequence is Adenine deaminase (337 aa).

Residues H17, H19, and H197 each contribute to the Zn(2+) site. Catalysis depends on E200, which acts as the Proton donor. D278 contributes to the Zn(2+) binding site. Position 279 (D279) interacts with substrate.

The protein belongs to the metallo-dependent hydrolases superfamily. Adenosine and AMP deaminases family. Adenine deaminase type 2 subfamily. The cofactor is Zn(2+).

It carries out the reaction adenine + H2O + H(+) = hypoxanthine + NH4(+). Its function is as follows. Catalyzes the hydrolytic deamination of adenine to hypoxanthine. Plays an important role in the purine salvage pathway and in nitrogen catabolism. This Zymomonas mobilis subsp. mobilis (strain ATCC 31821 / ZM4 / CP4) protein is Adenine deaminase.